Reading from the N-terminus, the 70-residue chain is Guanine nucleotide-binding protein G(I)/G(S)/G(O) subunit gamma-8 (70 aa).

Cys67 carries the cysteine methyl ester modification. A lipid anchor (S-geranylgeranyl cysteine) is attached at Cys67. Residues 68–70 constitute a propeptide, removed in mature form; the sequence is VLL.

Belongs to the G protein gamma family. As to quaternary structure, g proteins are composed of 3 units, alpha, beta and gamma.

Its subcellular location is the cell membrane. In terms of biological role, guanine nucleotide-binding proteins (G proteins) are involved as a modulator or transducer in various transmembrane signaling systems. The beta and gamma chains are required for the GTPase activity, for replacement of GDP by GTP, and for G protein-effector interaction. The sequence is that of Guanine nucleotide-binding protein G(I)/G(S)/G(O) subunit gamma-8 (GNG8) from Homo sapiens (Human).